A 99-amino-acid polypeptide reads, in one-letter code: Malonate decarboxylase acyl carrier protein (99 aa).

An O-(phosphoribosyl dephospho-coenzyme A)serine modification is found at S25.

It belongs to the MdcC family. Post-translationally, covalently binds the prosthetic group of malonate decarboxylase.

It localises to the cytoplasm. Functionally, subunit of malonate decarboxylase, it is an acyl carrier protein to which acetyl and malonyl thioester residues are bound via a 2'-(5''-phosphoribosyl)-3'-dephospho-CoA prosthetic group and turn over during the catalytic mechanism. The chain is Malonate decarboxylase acyl carrier protein from Pseudomonas syringae pv. syringae (strain B728a).